The chain runs to 175 residues: Large ribosomal subunit protein uL10 (175 aa).

Belongs to the universal ribosomal protein uL10 family. In terms of assembly, part of the ribosomal stalk of the 50S ribosomal subunit. The N-terminus interacts with L11 and the large rRNA to form the base of the stalk. The C-terminus forms an elongated spine to which L12 dimers bind in a sequential fashion forming a multimeric L10(L12)X complex.

Functionally, forms part of the ribosomal stalk, playing a central role in the interaction of the ribosome with GTP-bound translation factors. The polypeptide is Large ribosomal subunit protein uL10 (Synechococcus sp. (strain CC9605)).